The primary structure comprises 348 residues: NADH-quinone oxidoreductase subunit H (348 aa).

8 helical membrane-spanning segments follow: residues 21 to 41 (IAGI…VIYV), 87 to 107 (GIFL…WAVI), 120 to 140 (VGLL…VMAG), 166 to 186 (IGFI…SEIV), 195 to 215 (GIVN…LFFI), 258 to 278 (NILL…LPPI), 288 to 308 (GFLW…WIWA), and 325 to 345 (VFLP…MATG).

This sequence belongs to the complex I subunit 1 family. NDH-1 is composed of 14 different subunits. Subunits NuoA, H, J, K, L, M, N constitute the membrane sector of the complex.

It is found in the cell inner membrane. The catalysed reaction is a quinone + NADH + 5 H(+)(in) = a quinol + NAD(+) + 4 H(+)(out). In terms of biological role, NDH-1 shuttles electrons from NADH, via FMN and iron-sulfur (Fe-S) centers, to quinones in the respiratory chain. The immediate electron acceptor for the enzyme in this species is believed to be ubiquinone. Couples the redox reaction to proton translocation (for every two electrons transferred, four hydrogen ions are translocated across the cytoplasmic membrane), and thus conserves the redox energy in a proton gradient. This subunit may bind ubiquinone. This chain is NADH-quinone oxidoreductase subunit H, found in Erythrobacter litoralis (strain HTCC2594).